Here is a 123-residue protein sequence, read N- to C-terminus: Large ribosomal subunit protein bL12 (123 aa).

Residues asparagine 96–lysine 123 form a disordered region. Residues glycine 100–glutamate 114 are compositionally biased toward basic and acidic residues.

Belongs to the bacterial ribosomal protein bL12 family. In terms of assembly, homodimer. Part of the ribosomal stalk of the 50S ribosomal subunit. Forms a multimeric L10(L12)X complex, where L10 forms an elongated spine to which 2 to 4 L12 dimers bind in a sequential fashion. Binds GTP-bound translation factors.

Functionally, forms part of the ribosomal stalk which helps the ribosome interact with GTP-bound translation factors. Is thus essential for accurate translation. This Flavobacterium johnsoniae (strain ATCC 17061 / DSM 2064 / JCM 8514 / BCRC 14874 / CCUG 350202 / NBRC 14942 / NCIMB 11054 / UW101) (Cytophaga johnsonae) protein is Large ribosomal subunit protein bL12.